The following is a 394-amino-acid chain: Probable fatty acyl-CoA transferase Rv3272 (394 aa).

D175 functions as the Nucleophile in the catalytic mechanism.

It belongs to the CoA-transferase III family. In terms of assembly, homodimer.

Functionally, probably involved in fatty acid metabolism. Binds to fatty acyl-CoAs of varying carbon chain lengths, with the highest binding affinity for palmitoyl-CoA (C16:0). In vitro, alters the cell wall lipid profile and protects mycobacteria from acidic, oxidative and antibiotic stress. May play a significant role in host-pathogen interaction. The sequence is that of Probable fatty acyl-CoA transferase Rv3272 from Mycobacterium tuberculosis (strain ATCC 25618 / H37Rv).